The chain runs to 767 residues: Tetratricopeptide repeat protein 16 (767 aa).

9 TPR repeats span residues 18–51 (VREY…DPKL), 53–85 (DFYV…DPGN), 93–126 (AFVL…QPQN), 128–155 (SFSY…REVK), 208–241 (AKQS…NPLD), 242–275 (PNFF…VTDT), 288–321 (LLTY…EQNE), 322–355 (KGLY…SPLD), and 363–396 (GVLQ…SPQK). Residues 612–733 (EVTPAYGQRD…DSLSFSEISS (122 aa)) are disordered. The segment covering 684–718 (QRSSQKVTKTPSLTHSTTHSDIGESANDTPGQTPW) has biased composition (polar residues).

The sequence is that of Tetratricopeptide repeat protein 16 (Ttc16) from Mus musculus (Mouse).